The following is a 576-amino-acid chain: Alkaline phosphatase PhoD (576 aa).

The first 32 residues, 1–32 (MNSLLHHSFLKTVFSSLAIAIVTSSLSSVTIA), serve as a signal peptide directing secretion. 2 residues coordinate Zn(2+): aspartate 68 and threonine 107. Catalysis depends on threonine 107, which acts as the Phosphothreonine intermediate. The cysteines at positions 108 and 144 are disulfide-linked. Residues asparagine 128 and 188-190 (KDR) each bind substrate. A disulfide bridge links cysteine 248 with cysteine 332. The Zn(2+) site is built by aspartate 318, histidine 322, aspartate 363, histidine 364, and histidine 508. Cysteines 562 and 573 form a disulfide.

Monomer. It depends on Zn(2+) as a cofactor.

It catalyses the reaction a phosphate monoester + H2O = an alcohol + phosphate. Its function is as follows. Alkaline phosphatase with broad substrate specificity. Has phosphatase activity towards nucleotide and sugar phosphates with a preference to nucleotide phosphates. Has no phosphodiesterase activity. The sequence is that of Alkaline phosphatase PhoD from Zymomonas mobilis subsp. mobilis (strain ATCC 31821 / ZM4 / CP4).